The following is a 322-amino-acid chain: Cytochrome c biogenesis protein CcsA (322 aa).

Helical transmembrane passes span 9-29 (ILTHISFSVVSIVITIHLITL), 44-64 (GMITTFFCITGLLVTRWIFLG), 71-91 (LYESLIFLSWSFSIIHMVPYF), 97-117 (FLSAITAPSTFFTQGFATSGL), 143-163 (MILGYAALLCGSLFSVAFLVI), 225-245 (IISIGFIFLTIGILSGAVWAN), 254-274 (WDPKETWAFITWTIFAIYFHI), and 286-306 (AIVASIGFLLIWICYFGVNLL).

This sequence belongs to the CcmF/CycK/Ccl1/NrfE/CcsA family. As to quaternary structure, may interact with Ccs1.

The protein resides in the plastid. Its subcellular location is the chloroplast thylakoid membrane. Its function is as follows. Required during biogenesis of c-type cytochromes (cytochrome c6 and cytochrome f) at the step of heme attachment. The sequence is that of Cytochrome c biogenesis protein CcsA from Manihot esculenta (Cassava).